We begin with the raw amino-acid sequence, 982 residues long: Little elongation complex subunit 2 (982 aa).

Phosphoserine is present on residues Ser17 and Ser326. Positions 410–427 (TTKVSKSPSPASTSTVPN) are enriched in polar residues. Disordered regions lie at residues 410–450 (TTKV…PDIS) and 473–504 (GMDG…PLIQ). Over residues 479 to 497 (EECKNKDDQGFESCEKVSN) the composition is skewed to basic and acidic residues. Ser571 is modified (phosphoserine). Thr573 is modified (phosphothreonine). Disordered regions lie at residues 595–623 (VGSN…NTAC), 672–697 (ENSK…KSGW), and 930–982 (PKSL…RKIT). Residues 597–610 (SNLSSRPASPNSSS) are compositionally biased toward low complexity. Composition is skewed to polar residues over residues 611-623 (GQAS…NTAC) and 672-683 (ENSKQPSVSEQL). Residues 684 to 697 (SGPSDSSSWPKSGW) are compositionally biased toward low complexity. The span at 956-970 (SMETKSSCLPAQQVE) shows a compositional bias: polar residues.

It belongs to the ICE2 family. As to quaternary structure, component of the little elongation complex (LEC), at least composed of ELL (ELL, ELL2 or ELL3), ZC3H8, ICE1 and ICE2. Interacts with ICE1 (via C-terminus domain). Interacts with ELL. Expressed at low levels in lung and testis.

The protein resides in the nucleus. Component of the little elongation complex (LEC), a complex required to regulate small nuclear RNA (snRNA) gene transcription by RNA polymerase II and III. The chain is Little elongation complex subunit 2 (ICE2) from Homo sapiens (Human).